The following is a 141-amino-acid chain: Sperm protein associated with the nucleus on the X chromosome N3 (141 aa).

Positions 1–10 are enriched in polar residues; the sequence is MEQPTSSTNG. 2 disordered regions span residues 1 to 47 and 66 to 141; these read MEQP…TKTS and NQLE…SGED. A compositionally biased stretch (basic and acidic residues) spans 11–26; that stretch reads EKTKSPCESNNKKNDE. Positions 66-80 are enriched in polar residues; sequence NQLENEQSQENSINP. Residues 84-103 show a composition bias toward acidic residues; sequence EEDEGVDLSEGSSNEDEDLG. Polar residues predominate over residues 132–141; it reads EGSSQDSGED.

Belongs to the SPAN-X family.

The sequence is that of Sperm protein associated with the nucleus on the X chromosome N3 (SPANXN3) from Homo sapiens (Human).